The following is a 635-amino-acid chain: Glutamine sensor PIB2 (635 aa).

Positions 1-110 are disordered; the sequence is MTALHSVSKT…GTGFVDRKQQ (110 aa). The may play a role in attenuating TORC1 signaling stretch occupies residues 1-164; it reads MTALHSVSKT…KTLPFTDDQR (164 aa). The span at 33 to 44 shows a compositional bias: basic and acidic residues; sequence RNHDYRGRKGDE. A phosphoserine mark is found at Ser46 and Ser53. Thr56 is modified (phosphothreonine). A compositionally biased stretch (polar residues) spans 67–85; sequence STHSEQSILSSISLKSMVN. 6 positions are modified to phosphoserine: Ser73, Ser113, Ser124, Ser148, Ser165, and Ser174. 2 disordered regions span residues 123–181 and 224–254; these read NSAE…VSRG and SSNLRLSKENKAKESSSSSTSSVSSSSTSKV. Over residues 238–254 the composition is skewed to low complexity; that stretch reads SSSSSTSSVSSSSTSKV. Phosphoserine is present on residues Ser300, Ser309, and Ser381. Residues 304 to 440 are required for interaction with TORC1; it reads LPQPASSTNL…PTISNRNSAR (137 aa). The segment at 452–527 adopts an FYVE-type; atypical zinc-finger fold; that stretch reads DSKRNSCRYC…ICDDCLVEYE (76 aa). Cys458, Cys461, Cys474, Cys477, Cys482, His485, Cys519, and Cys522 together coordinate Zn(2+). Disordered stretches follow at residues 534–557 and 570–623; these read HNANTNEDNINVEEGEDDDNDNRK and ALFR…GSVI. Acidic residues-rich tracts occupy residues 543–553 and 601–616; these read INVEEGEDDDN and EEADNENTGGEQEEGN. Positions 620 to 635 are may be required for TORC1 activation; sequence GSVIGSVPANWNWSSF.

In terms of assembly, interacts with the TORC1 complex when activated by glutamine or cysteine. Interacts with TOR1; glutamine enhances the interaction. Interacts with KOG1; glutamine enhances the interaction. Interacts with TCO89. Interacts with LST8; glutamine enhances the interaction. Interacts with TOR2; glutamine enhances the interaction.

It localises to the vacuole membrane. With respect to regulation, activated by glutamine. May also be activated by cysteine. In terms of biological role, functions as an intracellular glutamine sensor that directly activates the TORC1 signaling pathway, to promote cell growth when glutamine is available. May play a role in repressing NPR1 activity independently of TORC1 signaling. The protein is Glutamine sensor PIB2 of Saccharomyces cerevisiae (strain ATCC 204508 / S288c) (Baker's yeast).